The following is a 134-amino-acid chain: Small ribosomal subunit protein bS16 (134 aa).

The interval 115 to 134 (AKLRRRQAKKAAEAAGSAEG) is disordered.

The protein belongs to the bacterial ribosomal protein bS16 family.

The protein is Small ribosomal subunit protein bS16 of Chlorobaculum tepidum (strain ATCC 49652 / DSM 12025 / NBRC 103806 / TLS) (Chlorobium tepidum).